The primary structure comprises 833 residues: Leucine--tRNA ligase (833 aa).

A 'HIGH' region motif is present at residues 41–52; the sequence is PYPSGAGLHVGH. Positions 610-614 match the 'KMSKS' region motif; sequence KMSKS. Lysine 613 contributes to the ATP binding site.

The protein belongs to the class-I aminoacyl-tRNA synthetase family.

It is found in the cytoplasm. The enzyme catalyses tRNA(Leu) + L-leucine + ATP = L-leucyl-tRNA(Leu) + AMP + diphosphate. This is Leucine--tRNA ligase from Streptococcus suis (strain 98HAH33).